A 143-amino-acid chain; its full sequence is NADH-quinone oxidoreductase subunit A (143 aa).

Helical transmembrane passes span 8-28 (FGNV…GYLT), 63-83 (FYVV…LFPW), and 93-113 (FALI…VYAW).

The protein belongs to the complex I subunit 3 family. As to quaternary structure, NDH-1 is composed of 14 different subunits. Subunits NuoA, H, J, K, L, M, N constitute the membrane sector of the complex.

It is found in the cell inner membrane. The catalysed reaction is a quinone + NADH + 5 H(+)(in) = a quinol + NAD(+) + 4 H(+)(out). Its function is as follows. NDH-1 shuttles electrons from NADH, via FMN and iron-sulfur (Fe-S) centers, to quinones in the respiratory chain. The immediate electron acceptor for the enzyme in this species is believed to be a menaquinone. Couples the redox reaction to proton translocation (for every two electrons transferred, four hydrogen ions are translocated across the cytoplasmic membrane), and thus conserves the redox energy in a proton gradient. In Chlorobium luteolum (strain DSM 273 / BCRC 81028 / 2530) (Pelodictyon luteolum), this protein is NADH-quinone oxidoreductase subunit A.